Reading from the N-terminus, the 84-residue chain is Large ribosomal subunit protein eL34 (84 aa).

This sequence belongs to the eukaryotic ribosomal protein eL34 family.

This is Large ribosomal subunit protein eL34 (ribL34e) from Pyrobaculum aerophilum (strain ATCC 51768 / DSM 7523 / JCM 9630 / CIP 104966 / NBRC 100827 / IM2).